A 263-amino-acid polypeptide reads, in one-letter code: Small ribosomal subunit protein eS4, Y isoform 2 (263 aa).

An S4 RNA-binding domain is found at 42–104 (LPLIVFLRNR…TGEHFRLVYD (63 aa)).

The protein belongs to the eukaryotic ribosomal protein eS4 family.

This Pan troglodytes (Chimpanzee) protein is Small ribosomal subunit protein eS4, Y isoform 2 (RPS4Y2).